The following is an 81-amino-acid chain: MKQGIHPDYHLVVFEDSATGYKFISGSTATSKETVEWEDGNEYPLVRVEVTSDSHPFYTGKQKFTQADGAVDKFNKKYGFK.

The protein belongs to the bacterial ribosomal protein bL31 family. Type B subfamily. Part of the 50S ribosomal subunit.

This is Large ribosomal subunit protein bL31B from Limosilactobacillus fermentum (strain NBRC 3956 / LMG 18251) (Lactobacillus fermentum).